A 137-amino-acid chain; its full sequence is Holo-[acyl-carrier-protein] synthase (137 aa).

Mg(2+) contacts are provided by Asp7 and Glu58.

The protein belongs to the P-Pant transferase superfamily. AcpS family. It depends on Mg(2+) as a cofactor.

It is found in the cytoplasm. The catalysed reaction is apo-[ACP] + CoA = holo-[ACP] + adenosine 3',5'-bisphosphate + H(+). Its function is as follows. Transfers the 4'-phosphopantetheine moiety from coenzyme A to a Ser of acyl-carrier-protein. The chain is Holo-[acyl-carrier-protein] synthase from Chloroflexus aurantiacus (strain ATCC 29366 / DSM 635 / J-10-fl).